The primary structure comprises 158 residues: Putative ribonucleoside-diphosphate reductase small chain B (158 aa).

Belongs to the ribonucleoside diphosphate reductase small chain family.

In Arabidopsis thaliana (Mouse-ear cress), this protein is Putative ribonucleoside-diphosphate reductase small chain B (RNR2B).